Reading from the N-terminus, the 291-residue chain is Putative ribosomal protein uL16-like, mitochondrial (291 aa).

The N-terminal 27 residues, methionine 1–leucine 27, are a transit peptide targeting the mitochondrion. Over residues valine 127–glutamine 137 the composition is skewed to basic and acidic residues. The tract at residues valine 127–arginine 173 is disordered. Residues arginine 163–arginine 173 are compositionally biased toward basic residues.

It belongs to the universal ribosomal protein uL16 family.

It is found in the mitochondrion. Its function is as follows. Could be a component of the large subunit of mitochondrial ribosome. This Arabidopsis thaliana (Mouse-ear cress) protein is Putative ribosomal protein uL16-like, mitochondrial.